Consider the following 334-residue polypeptide: Flotillin-like protein FloA (334 aa).

The helical transmembrane segment at 3 to 23 threads the bilayer; that stretch reads LYLIFLIVVGVVGLVLVGLFL.

This sequence belongs to the flotillin-like FloA family. As to quaternary structure, homooligomerizes.

The protein resides in the cell membrane. It is found in the membrane raft. Its function is as follows. Found in functional membrane microdomains (FMM) that may be equivalent to eukaryotic membrane rafts. FMMs are highly dynamic and increase in number as cells age. Flotillins are thought to be important factors in membrane fluidity. The sequence is that of Flotillin-like protein FloA from Opitutus terrae (strain DSM 11246 / JCM 15787 / PB90-1).